Consider the following 206-residue polypeptide: Large ribosomal subunit protein uL4 (206 aa).

This sequence belongs to the universal ribosomal protein uL4 family. In terms of assembly, part of the 50S ribosomal subunit.

Its function is as follows. One of the primary rRNA binding proteins, this protein initially binds near the 5'-end of the 23S rRNA. It is important during the early stages of 50S assembly. It makes multiple contacts with different domains of the 23S rRNA in the assembled 50S subunit and ribosome. Forms part of the polypeptide exit tunnel. The sequence is that of Large ribosomal subunit protein uL4 from Methylocella silvestris (strain DSM 15510 / CIP 108128 / LMG 27833 / NCIMB 13906 / BL2).